The sequence spans 258 residues: Apolipoprotein E (258 aa).

An N-terminal signal peptide occupies residues 1-19 (MRVWTVLLGAVLLLAACQA). 3 tandem repeats follow at residues 112–133 (VDME…QVAG), 134–155 (QNLE…KRLA), and 156–173 (KDTE…KEAT). A 3 X 22 AA approximate tandem repeats region spans residues 112-173 (VDMEEAKTRV…KLEAYSKEAT (62 aa)).

It belongs to the apolipoprotein A1/A4/E family. As to quaternary structure, homotetramer.

It is found in the secreted. The protein localises to the extracellular space. Its subcellular location is the extracellular matrix. In terms of biological role, APOE is an apolipoprotein, a protein associating with lipid particles, that mainly functions in lipoprotein-mediated lipid transport between organs via the plasma and interstitial fluids. APOE is a core component of plasma lipoproteins and is involved in their production, conversion and clearance. Apolipoproteins are amphipathic molecules that interact both with lipids of the lipoprotein particle core and the aqueous environment of the plasma. The polypeptide is Apolipoprotein E (APOE) (Alligator mississippiensis (American alligator)).